The sequence spans 436 residues: Aminotransferase tdiD (436 aa).

Arg-30, Tyr-86, Tyr-148, and Asn-202 together coordinate substrate. An N6-(pyridoxal phosphate)lysine modification is found at Lys-270. A substrate-binding site is contributed by Arg-407.

It belongs to the class-I pyridoxal-phosphate-dependent aminotransferase family. Requires pyridoxal 5'-phosphate as cofactor.

It carries out the reaction 3-phenylpyruvate + L-tryptophan = indole-3-pyruvate + L-phenylalanine. The protein operates within secondary metabolite biosynthesis. In terms of biological role, aminotransferase; part of the gene cluster that mediates the biosynthesis of terrequinone A, an antitumor agent. The first step in the biosynthetic pathway for terrequinone A is formation of indole pyruvic acid (IPA) from L-tryptophan by the aminotransferase tdiD. The nonribosomal peptide synthase tdiA then immediately converts unstable IPA to didemethylasterriquinone D (DDAQ D), via condensation of 2 IPA molecules. The symmetric connectivity of the 2 IPA molecules is thought to arise by head-to-tail dual Claisen condensations facilitated by the TE domain. TdiB then catalyzes reverse prenylation by transferring dimethylallyl diphosphate to carbon atom 2' of DDAQ D, to yield asterriquinone C-1. Finally, tdiC and tdiE enzymes robustly convert asterriquinone C-1 to terrequinone A via a transformation involving regular prenylation at carbon atom 5, which requires elimination of the hydroxy group on C-5. The sequence is that of Aminotransferase tdiD from Emericella nidulans (strain FGSC A4 / ATCC 38163 / CBS 112.46 / NRRL 194 / M139) (Aspergillus nidulans).